The following is a 46-amino-acid chain: MISSHQKTLTDKELALISGGKTHYPTNAWKSLWKGFWESLRYTDGF.

Positions 1 to 20 are excised as a propeptide; it reads MISSHQKTLTDKELALISGG.

It localises to the secreted. In terms of biological role, has a bactericidal effect on sensitive cells but not a bacteriolytic effect. This Lactobacillus acidophilus protein is Bacteriocin acidocin 8912 (acdT).